Consider the following 688-residue polypeptide: Mitochondrial potassium channel ATP-binding subunit (688 aa).

A mitochondrion-targeting transit peptide spans 1 to 31; the sequence is MLFHFLQAGLRQCRPPARLVGLETGLSGARG. 4 consecutive transmembrane segments (helical) span residues 115–135, 168–188, 268–288, and 342–362; these read PQLI…LLNI, LKLL…IVLL, GLLL…GSFL, and VLGV…NCIV. Residues 121-409 enclose the ABC transmembrane type-1 domain; sequence LTAVLLAFGA…MSVLFGQVVR (289 aa). Residues 442-679 form the ABC transporter domain; the sequence is IHFKDVSFSY…GGLYADLIRR (238 aa). Residue 477–484 participates in ATP binding; sequence GQSGGGKS.

Belongs to the ABC transporter superfamily. ABCB family. Multidrug resistance exporter (TC 3.A.1.201) subfamily. In terms of assembly, component of the mitochondrial potassium channel (mitoK(ATP)).

Its subcellular location is the mitochondrion inner membrane. ATP-binding subunit of the mitochondrial ATP-gated potassium channel (mitoK(ATP)). Together with pore-forming subunit CCDC51/MITOK of the mitoK(ATP) channel, mediates ATP-dependent potassium currents across the mitochondrial inner membrane. An increase in ATP intracellular levels closes the channel, inhibiting K(+) transport, whereas a decrease in ATP levels enhances K(+) uptake in the mitochondrial matrix. Plays a role in mitochondrial iron transport. Required for maintenance of normal cardiac function, possibly by influencing mitochondrial iron export and regulating the maturation of cytosolic iron sulfur cluster-containing enzymes. In Xenopus tropicalis (Western clawed frog), this protein is Mitochondrial potassium channel ATP-binding subunit.